The primary structure comprises 90 residues: Probable Fe(2+)-trafficking protein (90 aa).

This sequence belongs to the Fe(2+)-trafficking protein family. As to quaternary structure, monomer.

Its function is as follows. Could be a mediator in iron transactions between iron acquisition and iron-requiring processes, such as synthesis and/or repair of Fe-S clusters in biosynthetic enzymes. The sequence is that of Probable Fe(2+)-trafficking protein from Yersinia enterocolitica serotype O:8 / biotype 1B (strain NCTC 13174 / 8081).